A 205-amino-acid polypeptide reads, in one-letter code: Holliday junction branch migration complex subunit RuvA (205 aa).

The tract at residues 1-64 (MIGKLKGVID…EDMIRLYGFA (64 aa)) is domain I. The domain II stretch occupies residues 65–143 (TQLEREWFRL…AFAGEASGTI (79 aa)). The tract at residues 144–152 (GLKQELGAG) is flexible linker. The domain III stretch occupies residues 153–205 (AAPAPVADAVSALSNLGYSRDQAANAVAAALKETGEGADSAKLIRLGLKELSQ).

This sequence belongs to the RuvA family. Homotetramer. Forms an RuvA(8)-RuvB(12)-Holliday junction (HJ) complex. HJ DNA is sandwiched between 2 RuvA tetramers; dsDNA enters through RuvA and exits via RuvB. An RuvB hexamer assembles on each DNA strand where it exits the tetramer. Each RuvB hexamer is contacted by two RuvA subunits (via domain III) on 2 adjacent RuvB subunits; this complex drives branch migration. In the full resolvosome a probable DNA-RuvA(4)-RuvB(12)-RuvC(2) complex forms which resolves the HJ.

The protein localises to the cytoplasm. The RuvA-RuvB-RuvC complex processes Holliday junction (HJ) DNA during genetic recombination and DNA repair, while the RuvA-RuvB complex plays an important role in the rescue of blocked DNA replication forks via replication fork reversal (RFR). RuvA specifically binds to HJ cruciform DNA, conferring on it an open structure. The RuvB hexamer acts as an ATP-dependent pump, pulling dsDNA into and through the RuvAB complex. HJ branch migration allows RuvC to scan DNA until it finds its consensus sequence, where it cleaves and resolves the cruciform DNA. This chain is Holliday junction branch migration complex subunit RuvA, found in Brucella abortus (strain S19).